The sequence spans 763 residues: Phosphoglycerol transferase I (763 aa).

A run of 4 helical transmembrane segments spans residues Leu4–Trp19, Trp26–Ser48, Tyr76–Leu98, and Pro105–Ala127.

It belongs to the OpgB family.

Its subcellular location is the cell inner membrane. It carries out the reaction a phosphatidylglycerol + a membrane-derived-oligosaccharide D-glucose = a 1,2-diacyl-sn-glycerol + a membrane-derived-oligosaccharide 6-(glycerophospho)-D-glucose.. It participates in glycan metabolism; osmoregulated periplasmic glucan (OPG) biosynthesis. Transfers a phosphoglycerol residue from phosphatidylglycerol to the membrane-bound nascent glucan backbones. This chain is Phosphoglycerol transferase I, found in Escherichia coli O6:H1 (strain CFT073 / ATCC 700928 / UPEC).